A 119-amino-acid chain; its full sequence is Large ribosomal subunit protein uL18 (119 aa).

The protein belongs to the universal ribosomal protein uL18 family. As to quaternary structure, part of the 50S ribosomal subunit; part of the 5S rRNA/L5/L18/L25 subcomplex. Contacts the 5S and 23S rRNAs.

Functionally, this is one of the proteins that bind and probably mediate the attachment of the 5S RNA into the large ribosomal subunit, where it forms part of the central protuberance. The sequence is that of Large ribosomal subunit protein uL18 from Nitratidesulfovibrio vulgaris (strain DP4) (Desulfovibrio vulgaris).